A 245-amino-acid chain; its full sequence is Ribonuclease 3 (245 aa).

An RNase III domain is found at 17–146 (FTDKMKSLGL…FVGALYLDQG (130 aa)). Residue E59 participates in Mg(2+) binding. D63 is an active-site residue. 2 residues coordinate Mg(2+): D132 and E135. Residue E135 is part of the active site. Positions 172 to 241 (DFKTQFQEYV…AEQAYKLMKN (70 aa)) constitute a DRBM domain.

The protein belongs to the ribonuclease III family. As to quaternary structure, homodimer. It depends on Mg(2+) as a cofactor.

The protein localises to the cytoplasm. It carries out the reaction Endonucleolytic cleavage to 5'-phosphomonoester.. In terms of biological role, digests double-stranded RNA. Involved in the processing of primary rRNA transcript to yield the immediate precursors to the large and small rRNAs (23S and 16S). Processes some mRNAs, and tRNAs when they are encoded in the rRNA operon. Processes pre-crRNA and tracrRNA of type II CRISPR loci if present in the organism. This chain is Ribonuclease 3, found in Staphylococcus epidermidis (strain ATCC 35984 / DSM 28319 / BCRC 17069 / CCUG 31568 / BM 3577 / RP62A).